The sequence spans 97 residues: Citrate lyase acyl carrier protein (97 aa).

At Ser14 the chain carries O-(phosphoribosyl dephospho-coenzyme A)serine.

This sequence belongs to the CitD family. As to quaternary structure, oligomer with a subunit composition of (alpha,beta,gamma)6.

The protein localises to the cytoplasm. Functionally, covalent carrier of the coenzyme of citrate lyase. This Oenococcus oeni (strain ATCC BAA-331 / PSU-1) protein is Citrate lyase acyl carrier protein.